A 315-amino-acid polypeptide reads, in one-letter code: Glutathione synthetase (315 aa).

The region spanning 125–310 (KLFTAWFSDL…ITGMLMDAIE (186 aa)) is the ATP-grasp domain. 151 to 207 (WEKHSDIILKPLDGMGGASIFRVKEGDPNLGVIAETLTEHGTRYCMAQNYLPAIKDG) contributes to the ATP binding site. Residues Glu-281 and Asn-283 each coordinate Mg(2+).

Belongs to the prokaryotic GSH synthase family. It depends on Mg(2+) as a cofactor. Mn(2+) is required as a cofactor.

The enzyme catalyses gamma-L-glutamyl-L-cysteine + glycine + ATP = glutathione + ADP + phosphate + H(+). Its pathway is sulfur metabolism; glutathione biosynthesis; glutathione from L-cysteine and L-glutamate: step 2/2. This is Glutathione synthetase from Escherichia coli O157:H7.